Reading from the N-terminus, the 273-residue chain is Undecaprenyl-diphosphatase (273 aa).

Transmembrane regions (helical) follow at residues 3–23, 48–68, 89–109, 116–136, 151–171, 192–212, 225–245, and 253–273; these read IIELIKALILGLVEGATEFAP, GANTFKVVIQLGSVLAAVVVF, LTLMHIFVGLLPAGVLGVLFE, LFSTKTVLIGLVLGALLMIAA, ITYKQAFIVGLVQCLSLWPGF, ADFTFIMAVPIMAGASAISLL, FFVVGFISAFVFALLAIRFFL, and LVPFAIYRIVLAAVIYVVYFA.

It belongs to the UppP family.

The protein localises to the cell membrane. It catalyses the reaction di-trans,octa-cis-undecaprenyl diphosphate + H2O = di-trans,octa-cis-undecaprenyl phosphate + phosphate + H(+). In terms of biological role, catalyzes the dephosphorylation of undecaprenyl diphosphate (UPP). Confers resistance to bacitracin. The polypeptide is Undecaprenyl-diphosphatase (Anoxybacillus flavithermus (strain DSM 21510 / WK1)).